A 194-amino-acid chain; its full sequence is ATP-dependent Clp protease proteolytic subunit (194 aa).

Catalysis depends on Ser-98, which acts as the Nucleophile. His-123 is an active-site residue.

It belongs to the peptidase S14 family. In terms of assembly, fourteen ClpP subunits assemble into 2 heptameric rings which stack back to back to give a disk-like structure with a central cavity, resembling the structure of eukaryotic proteasomes.

It is found in the cytoplasm. The catalysed reaction is Hydrolysis of proteins to small peptides in the presence of ATP and magnesium. alpha-casein is the usual test substrate. In the absence of ATP, only oligopeptides shorter than five residues are hydrolyzed (such as succinyl-Leu-Tyr-|-NHMec, and Leu-Tyr-Leu-|-Tyr-Trp, in which cleavage of the -Tyr-|-Leu- and -Tyr-|-Trp bonds also occurs).. Functionally, cleaves peptides in various proteins in a process that requires ATP hydrolysis. Has a chymotrypsin-like activity. Plays a major role in the degradation of misfolded proteins. The polypeptide is ATP-dependent Clp protease proteolytic subunit (Clostridium botulinum (strain Loch Maree / Type A3)).